The following is a 108-amino-acid chain: Heme-degrading monooxygenase HmoA (108 aa).

The ABM domain maps to 2-95 (FVQLRKMTVK…DYLISTEVSM (94 aa)). Heme is bound at residue His76.

It belongs to the antibiotic biosynthesis monooxygenase family. Homodimer.

Its subcellular location is the cytoplasm. The enzyme catalyses heme b + 3 reduced [NADPH--hemoprotein reductase] + 3 O2 = biliverdin IXalpha + CO + Fe(2+) + 3 oxidized [NADPH--hemoprotein reductase] + 3 H2O + H(+). Its function is as follows. Allows bacterial pathogens to use the host heme as an iron source. Catalyzes the oxidative degradation of the heme macrocyclic porphyrin ring in the presence of a suitable electron donor such as ascorbate or NADPH--cytochrome P450 reductase, with subsequent release of free iron. This chain is Heme-degrading monooxygenase HmoA (hmoA), found in Bacillus subtilis (strain 168).